The following is a 129-amino-acid chain: Glycine cleavage system H protein (129 aa).

The Lipoyl-binding domain maps to 24–106; sequence TYTVGITEHA…YTDGWIFKIK (83 aa). Residue lysine 65 is modified to N6-lipoyllysine.

The protein belongs to the GcvH family. The glycine cleavage system is composed of four proteins: P, T, L and H. (R)-lipoate is required as a cofactor.

The glycine cleavage system catalyzes the degradation of glycine. The H protein shuttles the methylamine group of glycine from the P protein to the T protein. The sequence is that of Glycine cleavage system H protein from Klebsiella pneumoniae subsp. pneumoniae (strain ATCC 700721 / MGH 78578).